Consider the following 629-residue polypeptide: Kelch-like protein 8 (629 aa).

Residues 1-10 (MASESTNGKQ) are compositionally biased toward polar residues. Positions 1 to 40 (MASESTNGKQARSHVTKGRRQYQHQHQQQQQQQQQVRSRS) are disordered. An N-acetylalanine modification is found at alanine 2. Residues 11 to 23 (ARSHVTKGRRQYQ) are compositionally biased toward basic residues. Over residues 24-35 (HQHQQQQQQQQQ) the composition is skewed to low complexity. One can recognise a BTB domain in the interval 76–143 (CDVTLKVGSK…VYSSRLTLTV (68 aa)). The BACK domain maps to 178-279 (CLAVRAFAES…LPVDFLMGVV (102 aa)). 6 Kelch repeats span residues 328 to 375 (VLFC…SVEG), 376 to 422 (KVYA…SLGG), 424 to 469 (IYAI…ALIN), 471 to 516 (VYAV…ELHG), 517 to 563 (CLYV…TVMG), and 565 to 610 (IFAV…VCDC).

In terms of assembly, component of the BCR(KLHL8) E3 ubiquitin ligase complex, at least composed of CUL3, KLHL8 and RBX1. Interacts with RAPSN.

Its pathway is protein modification; protein ubiquitination. Its function is as follows. Substrate-specific adapter of a BCR (BTB-CUL3-RBX1) E3 ubiquitin ligase complex required for The BCR(KLHL8) ubiquitin ligase complex mediates ubiquitination and degradation of RAPSN. The protein is Kelch-like protein 8 (Klhl8) of Mus musculus (Mouse).